The following is a 435-amino-acid chain: 5-methylthioadenosine/S-adenosylhomocysteine deaminase (435 aa).

2 residues coordinate Zn(2+): histidine 65 and histidine 67. Residues glutamate 94, arginine 150, and histidine 189 each contribute to the substrate site. Histidine 216 serves as a coordination point for Zn(2+). The substrate site is built by glutamate 219 and aspartate 304. Position 304 (aspartate 304) interacts with Zn(2+).

Belongs to the metallo-dependent hydrolases superfamily. MTA/SAH deaminase family. The cofactor is Zn(2+).

The catalysed reaction is S-adenosyl-L-homocysteine + H2O + H(+) = S-inosyl-L-homocysteine + NH4(+). It carries out the reaction S-methyl-5'-thioadenosine + H2O + H(+) = S-methyl-5'-thioinosine + NH4(+). Functionally, catalyzes the deamination of 5-methylthioadenosine and S-adenosyl-L-homocysteine into 5-methylthioinosine and S-inosyl-L-homocysteine, respectively. Is also able to deaminate adenosine. This Bacillus cereus (strain B4264) protein is 5-methylthioadenosine/S-adenosylhomocysteine deaminase.